Here is a 302-residue protein sequence, read N- to C-terminus: UDP-3-O-acyl-N-acetylglucosamine deacetylase (302 aa).

Positions 78, 235, and 239 each coordinate Zn(2+). Residue His262 is the Proton donor of the active site.

Belongs to the LpxC family. The cofactor is Zn(2+).

The catalysed reaction is a UDP-3-O-[(3R)-3-hydroxyacyl]-N-acetyl-alpha-D-glucosamine + H2O = a UDP-3-O-[(3R)-3-hydroxyacyl]-alpha-D-glucosamine + acetate. Its pathway is glycolipid biosynthesis; lipid IV(A) biosynthesis; lipid IV(A) from (3R)-3-hydroxytetradecanoyl-[acyl-carrier-protein] and UDP-N-acetyl-alpha-D-glucosamine: step 2/6. In terms of biological role, catalyzes the hydrolysis of UDP-3-O-myristoyl-N-acetylglucosamine to form UDP-3-O-myristoylglucosamine and acetate, the committed step in lipid A biosynthesis. The protein is UDP-3-O-acyl-N-acetylglucosamine deacetylase of Bdellovibrio bacteriovorus (strain ATCC 15356 / DSM 50701 / NCIMB 9529 / HD100).